We begin with the raw amino-acid sequence, 209 residues long: Uracil phosphoribosyltransferase (209 aa).

5-phospho-alpha-D-ribose 1-diphosphate contacts are provided by residues Arg-79, Arg-104, and 131-139 (DPMLATGGS). Uracil-binding positions include Ile-194 and 199 to 201 (GDA). Asp-200 contacts 5-phospho-alpha-D-ribose 1-diphosphate.

This sequence belongs to the UPRTase family. Mg(2+) serves as cofactor.

It catalyses the reaction UMP + diphosphate = 5-phospho-alpha-D-ribose 1-diphosphate + uracil. The protein operates within pyrimidine metabolism; UMP biosynthesis via salvage pathway; UMP from uracil: step 1/1. With respect to regulation, allosterically activated by GTP. Its function is as follows. Catalyzes the conversion of uracil and 5-phospho-alpha-D-ribose 1-diphosphate (PRPP) to UMP and diphosphate. This is Uracil phosphoribosyltransferase from Streptococcus pneumoniae serotype 4 (strain ATCC BAA-334 / TIGR4).